The primary structure comprises 101 residues: Integration host factor subunit beta (101 aa).

The segment at 58–101 (ARAGRNPRTGAHVPVDQKSVPFFKTGKEMRERLNRDTGAPDSGA) is disordered. Residues 82–92 (TGKEMRERLNR) are compositionally biased toward basic and acidic residues.

Belongs to the bacterial histone-like protein family. In terms of assembly, heterodimer of an alpha and a beta chain.

Functionally, this protein is one of the two subunits of integration host factor, a specific DNA-binding protein that functions in genetic recombination as well as in transcriptional and translational control. In Rhodopseudomonas palustris (strain BisB18), this protein is Integration host factor subunit beta.